A 401-amino-acid chain; its full sequence is 4-hydroxy-3-methylbut-2-en-1-yl diphosphate synthase (ferredoxin) (401 aa).

[4Fe-4S] cluster-binding residues include Cys-306, Cys-309, Cys-340, and Glu-347.

It belongs to the IspG family. It depends on [4Fe-4S] cluster as a cofactor.

It catalyses the reaction (2E)-4-hydroxy-3-methylbut-2-enyl diphosphate + 2 oxidized [2Fe-2S]-[ferredoxin] + H2O = 2-C-methyl-D-erythritol 2,4-cyclic diphosphate + 2 reduced [2Fe-2S]-[ferredoxin] + H(+). It functions in the pathway isoprenoid biosynthesis; isopentenyl diphosphate biosynthesis via DXP pathway; isopentenyl diphosphate from 1-deoxy-D-xylulose 5-phosphate: step 5/6. In terms of biological role, converts 2C-methyl-D-erythritol 2,4-cyclodiphosphate (ME-2,4cPP) into 1-hydroxy-2-methyl-2-(E)-butenyl 4-diphosphate. This Synechococcus sp. (strain CC9902) protein is 4-hydroxy-3-methylbut-2-en-1-yl diphosphate synthase (ferredoxin).